Consider the following 481-residue polypeptide: Cys-Gly metallodipeptidase DUG1 (481 aa).

His-102 provides a ligand contact to Zn(2+). Residue Asp-104 is part of the active site. A Zn(2+)-binding site is contributed by Asp-137. The active-site Proton acceptor is Glu-171. The Zn(2+) site is built by Glu-172, Asp-200, and His-450. Ser-451 is subject to Phosphoserine.

This sequence belongs to the peptidase M20A family. In terms of assembly, homodimer. Component of the GSH degradosomal complex composed of at least DUG1, DUG2 and DUG3. Requires Zn(2+) as cofactor. It depends on Mn(2+) as a cofactor.

It localises to the cytoplasm. The protein resides in the mitochondrion. Its function is as follows. Catalytic component of the GSH degradosomal complex involved in the degradation of glutathione (GSH) and other peptides containing a gamma-glu-X bond. Also functions in a DUG2-DUG3-independent manner as a dipeptidase with high specificity for Cys-Gly and no activity toward tri- or tetrapeptides. The protein is Cys-Gly metallodipeptidase DUG1 (DUG1) of Saccharomyces cerevisiae (strain ATCC 204508 / S288c) (Baker's yeast).